We begin with the raw amino-acid sequence, 591 residues long: Calnexin (591 aa).

Residues 1–20 (MEGKWLLCLLLVLGTAAIQA) form the signal peptide. The Lumenal segment spans residues 21–482 (HDGHDDDMID…QMLEAAEERP (462 aa)). Residues Ser75 and Asp118 each contribute to the Ca(2+) site. Residue Lys138 is modified to N6-acetyllysine. An intrachain disulfide couples Cys161 to Cys195. An alpha-D-glucoside is bound by residues Tyr165, Lys167, Tyr186, and Asp193. Residues 261 to 347 (GNLLNDMTPP…EKPEDWDEDM (87 aa)) are disordered. Basic and acidic residues predominate over residues 275–320 (REIEDPEDRKPEDWDERPKIADPDAVKPDDWDEDAPSKIPDEEATK). The tract at residues 277 to 410 (IEDPEDRKPE…RKIPNPDFFE (134 aa)) is p domain (Extended arm). A run of 5 repeats spans residues 279 to 291 (DPED…WDER), 296 to 308 (DPDA…WDED), 315 to 327 (DEEA…WLDD), 334 to 346 (DPDA…WDED), and 349 to 359 (GEWEAPQIANP). 4 X approximate repeats stretches follow at residues 279 to 346 (DPED…WDED) and 349 to 406 (GEWE…IPNP). A compositionally biased stretch (acidic residues) spans 324–347 (WLDDEPEYIPDPDAEKPEDWDEDM). The interval 327–360 (DEPEYIPDPDAEKPEDWDEDMDGEWEAPQIANPK) is interaction with PPIB. A disulfide bond links Cys361 and Cys367. A run of 3 repeats spans residues 368–378 (GVWQRPMIDNP), 382–392 (GKWKPPMIDNP), and 396–406 (GIWKPRKIPNP). An alpha-D-glucoside is bound at residue Glu426. Asp437 contacts Ca(2+). Residues 483 to 503 (WLWVVYILTVALPVFLVILFC) form a helical membrane-spanning segment. S-palmitoyl cysteine attachment occurs at residues Cys503 and Cys504. Residues 504–591 (CSGKKQSNAM…SPRNRKPRRE (88 aa)) lie on the Cytoplasmic side of the membrane. The tract at residues 504–591 (CSGKKQSNAM…SPRNRKPRRE (88 aa)) is sufficient to mediate interaction with SGIP1. The segment covering 514-538 (EYKKTDAPQPDVKDEEGKEEEKNKG) has biased composition (basic and acidic residues). Residues 514–591 (EYKKTDAPQP…SPRNRKPRRE (78 aa)) form a disordered region. The residue at position 553 (Ser553) is a Phosphoserine. Acidic residues predominate over residues 555-568 (AEEDGGTGSQDEED). Thr561 is subject to Phosphothreonine. At Ser563 the chain carries Phosphoserine; by MAPK3. Ser582 is subject to Phosphoserine.

The protein belongs to the calreticulin family. Interacts with MAPK3/ERK1. Interacts with KCNH2. Associates with ribosomes. Interacts with SGIP1; involved in negative regulation of endocytosis. The palmitoylated form interacts with the ribosome-translocon complex component SSR1, promoting efficient folding of glycoproteins. Interacts with SERPINA2P/SERPINA2 and with the S and Z variants of SERPINA1. Interacts with PPIB. Interacts with ZNRF4. Interacts with SMIM22. Interacts with TMX2. Interacts with TMEM35A/NACHO and CHRNA7. Interacts with reticulophagy regulators RETREG2 and RETREG3. Interacts with DNM1L; may form part of a larger protein complex at the ER-mitochondrial interface during mitochondrial fission. Interacts with ADAM7. Post-translationally, phosphorylated at Ser-563 by MAPK3/ERK1. Phosphorylation by MAPK3/ERK1 increases its association with ribosomes. Palmitoylation by DHHC6 leads to the preferential localization to the perinuclear rough ER. It mediates the association of calnexin with the ribosome-translocon complex (RTC) which is required for efficient folding of glycosylated proteins. In terms of processing, ubiquitinated, leading to proteasomal degradation. Probably ubiquitinated by ZNRF4.

Its subcellular location is the endoplasmic reticulum membrane. It localises to the mitochondrion membrane. The protein localises to the melanosome membrane. Functionally, calcium-binding protein that interacts with newly synthesized monoglucosylated glycoproteins in the endoplasmic reticulum. It may act in assisting protein assembly and/or in the retention within the ER of unassembled protein subunits. It seems to play a major role in the quality control apparatus of the ER by the retention of incorrectly folded proteins. Associated with partial T-cell antigen receptor complexes that escape the ER of immature thymocytes, it may function as a signaling complex regulating thymocyte maturation. Additionally it may play a role in receptor-mediated endocytosis at the synapse. The polypeptide is Calnexin (Canx) (Rattus norvegicus (Rat)).